We begin with the raw amino-acid sequence, 112 residues long: UPF0145 protein RB3016 (112 aa).

Belongs to the UPF0145 family.

This Rhodopirellula baltica (strain DSM 10527 / NCIMB 13988 / SH1) protein is UPF0145 protein RB3016.